Consider the following 82-residue polypeptide: KSIFERDRRDWLVIPDAVAAYIYEAVNKMSPRAGQFLVDISQTTVVSGTRNFLIRETARLTILAEQLMEKIKNLWYTKVQGY.

The protein belongs to the apovitellenin family. In terms of assembly, monomer. Found in egg yolk and in plasma.

Protein component of the very low density lipoprotein (VLDL) of egg-laying females. Potent lipoprotein lipase inhibitor, preventing the loss of triglycerides from VLDL on their way from the liver to the growing oocytes. In Meleagris gallopavo (Wild turkey), this protein is Apovitellenin-1.